The chain runs to 484 residues: Arginine ADP-riboxanase OspC3 (484 aa).

Residues His143, Gln144, Ser145, Asn155, Lys157, Thr169, Asn172, and Thr173 each coordinate NAD(+). Glu326 is an active-site residue. ANK repeat units follow at residues Met369–Gln398, Asn413–Lys444, and Ser451–Lys480.

Belongs to the OspC family. As to quaternary structure, interacts with host calmodulin (CALM1, CALM2 and/or CALM3); specifically interacts with the apo form of calmodulin, preventing calcium-binding.

The protein localises to the secreted. Its subcellular location is the host cytoplasm. It carries out the reaction L-arginyl-[protein] + NAD(+) = ADP-riboxanated L-argininyl-[protein] + nicotinamide + NH4(+) + H(+). Interaction with host calmodulin (CALM1, CALM2 and/or CALM3) is required to mediate arginine ADP-riboxanation of host caspases. Functionally, ADP-riboxanase effector that inhibits host cell pyroptosis. Acts by mediating arginine ADP-riboxanation of host CASP4/CASP11, blocking CASP4/CASP11 autoprocessing. This prevents CASP4 activation and ability to recognize and cleave GSDMD, thereby inhibiting LPS-induced pyroptosis. ADP-riboxanation takes place in two steps: OspC3 first catalyzes ADP-ribosylation of target Arg, and then initiates a deamination to remove one N-omega group. Independently of its ADP-riboxanase activity, acts as an inhibitor of calcium signaling by inhibiting host calmodulin, preventing activation of the JAK-STAT signaling pathway in response to interferon-beta. Mechanistically, acts by binding to the apo form of calmodulin, preventing calcium-binding and ability to activate host CaMK2 (CAMKII), which is required to stimulate the JAK-STAT signaling pathway in response to interferon-beta. The chain is Arginine ADP-riboxanase OspC3 from Shigella flexneri.